A 307-amino-acid chain; its full sequence is Small ribosomal subunit protein bS1 (307 aa).

S1 motif domains follow at residues 32-101 (GDTV…LSIR), 119-183 (DATV…LSHR), and 197-265 (GEVV…LSTK).

This sequence belongs to the bacterial ribosomal protein bS1 family.

Functionally, binds mRNA. The protein is Small ribosomal subunit protein bS1 (rpsA) of Synechococcus sp. (strain ATCC 27144 / PCC 6301 / SAUG 1402/1) (Anacystis nidulans).